A 251-amino-acid chain; its full sequence is MRRPMVAGNWKMHGTRASVAELINGLRHLALPSGVDVAVFPPCLYINQVIDGLKGKSIQVGAQNSAVESMQGALTGEIAPSQLVDAGCSLVLVGHSERRLIMGERDATLNRKFAAAQACGLKPVLCVGETLEQREAGKTLEVVGRQLGSIIEELGVGAFANAVIAYEPVWAIGTGLTATPQQAQDVHAAIRAQLAAENSEVARGVRLLYGGSVKAANAVELFGMPDIDGGLIGGASLNADEFGAICRAAGN.

Residue 9–11 (NWK) participates in substrate binding. His95 functions as the Electrophile in the catalytic mechanism. Residue Glu167 is the Proton acceptor of the active site. Substrate is bound by residues Gly173, Ser212, and 233–234 (GG).

Belongs to the triosephosphate isomerase family. As to quaternary structure, homodimer.

It localises to the cytoplasm. The enzyme catalyses D-glyceraldehyde 3-phosphate = dihydroxyacetone phosphate. It functions in the pathway carbohydrate biosynthesis; gluconeogenesis. The protein operates within carbohydrate degradation; glycolysis; D-glyceraldehyde 3-phosphate from glycerone phosphate: step 1/1. In terms of biological role, involved in the gluconeogenesis. Catalyzes stereospecifically the conversion of dihydroxyacetone phosphate (DHAP) to D-glyceraldehyde-3-phosphate (G3P). The protein is Triosephosphate isomerase of Pseudomonas fluorescens (strain ATCC BAA-477 / NRRL B-23932 / Pf-5).